A 1072-amino-acid polypeptide reads, in one-letter code: Carbamoyl phosphate synthase large chain (1072 aa).

The carboxyphosphate synthetic domain stretch occupies residues 1–401 (MPKRLDINTI…SLLKAVRSLE (401 aa)). Residues Arg-129, Arg-169, Gly-175, Gly-176, Lys-208, Ile-210, Glu-215, Gly-241, Val-242, His-243, Gln-284, and Glu-298 each contribute to the ATP site. The ATP-grasp 1 domain maps to 133–327 (RTLMQDLNEP…IAKLAAKIAV (195 aa)). Residues Gln-284, Glu-298, and Asn-300 each contribute to the Mg(2+) site. Residues Gln-284, Glu-298, and Asn-300 each contribute to the Mn(2+) site. Positions 402–546 (LGIYHLELDH…YSTYAEENES (145 aa)) are oligomerization domain. The tract at residues 547-929 (IVTDRKSVVV…ALYKGLVASG (383 aa)) is carbamoyl phosphate synthetic domain. The 191-residue stretch at 671–861 (EAALTKLGIP…MANVATKVIL (191 aa)) folds into the ATP-grasp 2 domain. 9 residues coordinate ATP: Arg-707, Arg-746, Glu-752, Gly-777, Val-778, His-779, Ser-780, Gln-820, and Glu-832. Mg(2+) is bound by residues Gln-820, Glu-832, and Asn-834. Mn(2+) is bound by residues Gln-820, Glu-832, and Asn-834. The region spanning 930–1072 (INIPTHGSVI…QTKRHEVVHA (143 aa)) is the MGS-like domain. Positions 930-1072 (INIPTHGSVI…QTKRHEVVHA (143 aa)) are allosteric domain.

The protein belongs to the CarB family. In terms of assembly, composed of two chains; the small (or glutamine) chain promotes the hydrolysis of glutamine to ammonia, which is used by the large (or ammonia) chain to synthesize carbamoyl phosphate. Tetramer of heterodimers (alpha,beta)4. It depends on Mg(2+) as a cofactor. Mn(2+) is required as a cofactor.

It catalyses the reaction hydrogencarbonate + L-glutamine + 2 ATP + H2O = carbamoyl phosphate + L-glutamate + 2 ADP + phosphate + 2 H(+). The catalysed reaction is hydrogencarbonate + NH4(+) + 2 ATP = carbamoyl phosphate + 2 ADP + phosphate + 2 H(+). It functions in the pathway amino-acid biosynthesis; L-arginine biosynthesis; carbamoyl phosphate from bicarbonate: step 1/1. It participates in pyrimidine metabolism; UMP biosynthesis via de novo pathway; (S)-dihydroorotate from bicarbonate: step 1/3. Its function is as follows. Large subunit of the glutamine-dependent carbamoyl phosphate synthetase (CPSase). CPSase catalyzes the formation of carbamoyl phosphate from the ammonia moiety of glutamine, carbonate, and phosphate donated by ATP, constituting the first step of 2 biosynthetic pathways, one leading to arginine and/or urea and the other to pyrimidine nucleotides. The large subunit (synthetase) binds the substrates ammonia (free or transferred from glutamine from the small subunit), hydrogencarbonate and ATP and carries out an ATP-coupled ligase reaction, activating hydrogencarbonate by forming carboxy phosphate which reacts with ammonia to form carbamoyl phosphate. The polypeptide is Carbamoyl phosphate synthase large chain (Bacillus cereus (strain ATCC 10987 / NRS 248)).